We begin with the raw amino-acid sequence, 1188 residues long: DNA-directed RNA polymerase subunit beta (1188 aa).

It belongs to the RNA polymerase beta chain family. As to quaternary structure, the RNAP catalytic core consists of 2 alpha, 1 beta, 1 beta' and 1 omega subunit. When a sigma factor is associated with the core the holoenzyme is formed, which can initiate transcription.

The enzyme catalyses RNA(n) + a ribonucleoside 5'-triphosphate = RNA(n+1) + diphosphate. Its function is as follows. DNA-dependent RNA polymerase catalyzes the transcription of DNA into RNA using the four ribonucleoside triphosphates as substrates. The protein is DNA-directed RNA polymerase subunit beta of Streptococcus equi subsp. equi (strain 4047).